Here is a 347-residue protein sequence, read N- to C-terminus: Dehydratase asqC (347 aa).

The N-terminal stretch at 1 to 18 (MRPAILAAFSTLPAAAKA) is a signal peptide. 7 N-linked (GlcNAc...) asparagine glycosylation sites follow: asparagine 51, asparagine 103, asparagine 131, asparagine 143, asparagine 215, asparagine 264, and asparagine 281.

It catalyses the reaction [(1'E)-5'-(3',3'-dimethyloxiran-2'-yl)-3'-hydroxy-3'-methylpent-1'-en-1'-yl]-quinolinone B = (1'E,3'E)-5-(3,3-dimethyloxiran-2-yl)-3-methylhexa-1,3-dienyl-quinolinone B + H2O. It participates in secondary metabolite biosynthesis. The protein operates within alkaloid biosynthesis. Its pathway is mycotoxin biosynthesis. Functionally, dehydratase; part of the gene cluster that mediates the biosynthesis of the aspoquinolone mycotoxins. Within the pathway, the dehydratase asqC catalyzes the dehydratation of the epoxide at C-3 to produce (1'E,3'E)-5-(3,3-dimethyloxiran-2-yl)-3-methylhexa-1,3-dienyl-quinolinone B. The first step of the pathway is catalyzed by the nonribosomal peptide synthetase asqK that condenses anthranilic acid and O-methyl-L-tyrosine to produce 4'-methoxycyclopeptin. 4'-methoxycyclopeptin is then converted to 4'-methoxydehydrocyclopeptin by the ketoglutarate-dependent dioxygenase asqJ. AsqJ also converts its first product 4'-methoxydehydrocyclopeptin to 4'-methoxycyclopenin. The following conversion of 4'-methoxycyclopenin into 4'-methoxyviridicatin is catalyzed by the cyclopenase asqI. 4'-methoxyviridicatin is the precursor of quinolone natural products, and is further converted to quinolinone B. The prenyltransferase asqH1 then catalyzes the canonical Friedel-Crafts alkylation of quinolinone B with dimethylallyl cation to yield dimethylallyl quinolone, which is subjected to FAD-dependent dehydrogenation by the FAD-linked oxidoreductase asqF to yield conjugated aryl diene. The delta(3') double bond then serves as the site of the second alkylation with DMAPP catalyzed by the prenyltransferase asqH2 to yield a carbenium ion intermediate, which can be attacked by H(2)O to yield a styrenyl quinolone containing a C3'-hydroxyprenyl chain. The FAD-dependent monooxygenase asqG performs epoxidation of the terminal C7'-C8' olefin. Finally, after dehydratation of the epoxide at C3 by asqC, the quinolone epoxide rearrangement protein asqO catalyzes an enzymatic 3-exo-tet cyclization to yield the cyclopropyl-THF ring system in aspoquinolone. This chain is Dehydratase asqC, found in Emericella nidulans (strain FGSC A4 / ATCC 38163 / CBS 112.46 / NRRL 194 / M139) (Aspergillus nidulans).